Consider the following 670-residue polypeptide: UvrABC system protein B (670 aa).

One can recognise a Helicase ATP-binding domain in the interval 28–414 (NNFKQGLQEQ…KKIPIVEQII (387 aa)). An ATP-binding site is contributed by 41–48 (GATGTGKT). The Beta-hairpin motif lies at 94-117 (YYDYYQPEAYVASSDTYIEKDSKI). A Helicase C-terminal domain is found at 432 to 594 (QMDDLYFEIK…VTPTALNKTI (163 aa)). The UVR domain occupies 631–666 (NKEIKRLQKMMKEAAKTLDFEKAATLRDLILELEKK).

This sequence belongs to the UvrB family. As to quaternary structure, forms a heterotetramer with UvrA during the search for lesions. Interacts with UvrC in an incision complex.

Its subcellular location is the cytoplasm. The UvrABC repair system catalyzes the recognition and processing of DNA lesions. A damage recognition complex composed of 2 UvrA and 2 UvrB subunits scans DNA for abnormalities. Upon binding of the UvrA(2)B(2) complex to a putative damaged site, the DNA wraps around one UvrB monomer. DNA wrap is dependent on ATP binding by UvrB and probably causes local melting of the DNA helix, facilitating insertion of UvrB beta-hairpin between the DNA strands. Then UvrB probes one DNA strand for the presence of a lesion. If a lesion is found the UvrA subunits dissociate and the UvrB-DNA preincision complex is formed. This complex is subsequently bound by UvrC and the second UvrB is released. If no lesion is found, the DNA wraps around the other UvrB subunit that will check the other stand for damage. This is UvrABC system protein B from Onion yellows phytoplasma (strain OY-M).